The sequence spans 428 residues: Adenylosuccinate synthetase (428 aa).

Residues 11-17 and 39-41 contribute to the GTP site; these read GDEGKGK and GHT. The active-site Proton acceptor is the aspartate 12. Positions 12 and 39 each coordinate Mg(2+). IMP contacts are provided by residues 12-15, 37-40, threonine 130, arginine 144, asparagine 226, threonine 241, and arginine 305; these read DEGK and NAGH. The Proton donor role is filled by histidine 40. Residue 301–307 coordinates substrate; the sequence is VTTGRKR. GTP is bound by residues arginine 307, 333 to 335, and 415 to 417; these read KLD and GTG.

The protein belongs to the adenylosuccinate synthetase family. In terms of assembly, homodimer. The cofactor is Mg(2+).

It is found in the cytoplasm. The enzyme catalyses IMP + L-aspartate + GTP = N(6)-(1,2-dicarboxyethyl)-AMP + GDP + phosphate + 2 H(+). Its pathway is purine metabolism; AMP biosynthesis via de novo pathway; AMP from IMP: step 1/2. Its function is as follows. Plays an important role in the de novo pathway and in the salvage pathway of purine nucleotide biosynthesis. Catalyzes the first committed step in the biosynthesis of AMP from IMP. This chain is Adenylosuccinate synthetase, found in Komagataella phaffii (strain GS115 / ATCC 20864) (Yeast).